The following is a 68-amino-acid chain: Large ribosomal subunit protein uL30 (68 aa).

It belongs to the universal ribosomal protein uL30 family. In terms of assembly, part of the 50S ribosomal subunit.

The sequence is that of Large ribosomal subunit protein uL30 from Bartonella henselae (strain ATCC 49882 / DSM 28221 / CCUG 30454 / Houston 1) (Rochalimaea henselae).